The following is a 393-amino-acid chain: Formate-dependent phosphoribosylglycinamide formyltransferase (393 aa).

N(1)-(5-phospho-beta-D-ribosyl)glycinamide contacts are provided by residues 22-23 (EL) and glutamate 82. Residues arginine 114, lysine 155, 160–165 (SSGHGQ), 195–198 (EGFI), and glutamate 203 contribute to the ATP site. The region spanning 119–308 (RLAAEELGLK…QFALHARAIL (190 aa)) is the ATP-grasp domain. Glutamate 267 and glutamate 279 together coordinate Mg(2+). N(1)-(5-phospho-beta-D-ribosyl)glycinamide-binding positions include aspartate 286, lysine 356, and 363–364 (RR).

Belongs to the PurK/PurT family. As to quaternary structure, homodimer.

It carries out the reaction N(1)-(5-phospho-beta-D-ribosyl)glycinamide + formate + ATP = N(2)-formyl-N(1)-(5-phospho-beta-D-ribosyl)glycinamide + ADP + phosphate + H(+). It functions in the pathway purine metabolism; IMP biosynthesis via de novo pathway; N(2)-formyl-N(1)-(5-phospho-D-ribosyl)glycinamide from N(1)-(5-phospho-D-ribosyl)glycinamide (formate route): step 1/1. Its function is as follows. Involved in the de novo purine biosynthesis. Catalyzes the transfer of formate to 5-phospho-ribosyl-glycinamide (GAR), producing 5-phospho-ribosyl-N-formylglycinamide (FGAR). Formate is provided by PurU via hydrolysis of 10-formyl-tetrahydrofolate. The sequence is that of Formate-dependent phosphoribosylglycinamide formyltransferase from Actinobacillus pleuropneumoniae serotype 5b (strain L20).